The chain runs to 370 residues: Chloromuconate cycloisomerase (370 aa).

K165 (proton acceptor) is an active-site residue. Mn(2+) contacts are provided by D194, E220, and D245. E323 acts as the Proton donor in catalysis.

It belongs to the mandelate racemase/muconate lactonizing enzyme family. Requires Mn(2+) as cofactor.

It catalyses the reaction 2-[(2R)-2-chloro-2,5-dihydro-5-oxofuryl]acetate = 3-chloro-cis,cis-muconate + H(+). It participates in aromatic compound metabolism; 3-chlorocatechol degradation. The polypeptide is Chloromuconate cycloisomerase (tfdDI) (Cupriavidus pinatubonensis (strain JMP 134 / LMG 1197) (Cupriavidus necator (strain JMP 134))).